The following is a 166-amino-acid chain: Probable calcium-binding protein CML17 (166 aa).

EF-hand domains lie at 12 to 47 (EQIN…LGVK), 48 to 83 (PSPD…ELLS), 91 to 126 (YTEE…LGHA), and 127 to 162 (LTVA…AAFD). Ca(2+) is bound by residues D25, N27, D29, S31, and E36. Ca(2+) contacts are provided by D104, D106, N108, E115, D140, D142, D144, R146, and E151.

Potential calcium sensor. In Arabidopsis thaliana (Mouse-ear cress), this protein is Probable calcium-binding protein CML17 (CML17).